The primary structure comprises 96 residues: UPF0213 protein BCE_0033 (96 aa).

Residues 4–79 form the GIY-YIG domain; the sequence is NKHCFYVVEC…KQLNRKQKEE (76 aa).

The protein belongs to the UPF0213 family.

The sequence is that of UPF0213 protein BCE_0033 from Bacillus cereus (strain ATCC 10987 / NRS 248).